Here is a 345-residue protein sequence, read N- to C-terminus: Putative pyridoxal reductase (345 aa).

The active-site Proton donor is Tyr60.

The protein belongs to the aldo/keto reductase family.

The protein resides in the cytoplasm. It localises to the nucleus. The catalysed reaction is pyridoxine + NADP(+) = pyridoxal + NADPH + H(+). Its pathway is cofactor degradation; B6 vitamer degradation; pyridoxal from pyridoxine (dehydrogenase route): step 1/1. Its function is as follows. Catalyzes the reduction of pyridoxal (PL) with NADPH and oxidation of pyridoxine (PN) with NADP(+). The protein is Putative pyridoxal reductase of Saccharomyces cerevisiae (strain ATCC 204508 / S288c) (Baker's yeast).